The sequence spans 126 residues: Bactofilin BacO (126 aa).

This sequence belongs to the bactofilin family. Interacts with BacN and probably also BacP, the 3 proteins colocalize as an extended structure. Interacts with PadC.

It is found in the cytoplasm. The protein resides in the cytoskeleton. Its function is as follows. A non-essential component of the chromosome segregation machinery. Positions the ParA-ParB-parS chromosome segregation machinery within the cell; BacP seems to be the most important bactofilin in this process. Forms a heteropolymeric, subpolar scaffold in the cell; BacP probably forms the core, BacO contributes to position and integrity while BacN does not seem to contribute to assembly. The polypeptide is Bactofilin BacO (Myxococcus xanthus (strain DK1622)).